Here is a 792-residue protein sequence, read N- to C-terminus: Homeobox protein HAZ1 (792 aa).

The disordered stretch occupies residues 1–154 (MDKTTTSDLV…RPPKGGTPKD (154 aa)). The segment covering 15 to 36 (NIGSNAGSAQEPLTTNGKTSGV) has biased composition (polar residues). The span at 38–49 (NRYKQTVKRGRK) shows a compositional bias: basic residues. Residues 51-67 (SQISPSKTYPLRSSHSN) show a composition bias toward polar residues. Residues 95–104 (VAKKRKRSKP) show a composition bias toward basic residues. Over residues 116–127 (TSEKKNKAHNEL) the composition is skewed to basic and acidic residues. The PHD-type zinc finger occupies 244–301 (DIFCAACGSKDVTLKNDIILCDGICDRGFHQYCLNPPLLAEDIPQGDEGWLCPACDCK). Disordered regions lie at residues 338–495 (QIDA…NSNL) and 529–599 (YGKA…SDQQ). Acidic residues predominate over residues 345–354 (PSDDSADNDY). The segment covering 362–371 (HKVDEEKSSG) has biased composition (basic and acidic residues). Composition is skewed to acidic residues over residues 373 to 389 (DGGEGLDSDDSSSEDSE) and 433 to 453 (DESNSDQSDESDFTSDSDDFC). The segment at residues 610–669 (STAKNRHFGPAINQKLKAHFKEDPYPSRATKENLAQELGLTFNQVTKWFSSTRHYARVAA) is a DNA-binding region (homeobox). 2 disordered regions span residues 677 to 697 (ENHTAENNNNTNTVDSIQLRG) and 711 to 792 (SEER…KTGR). Composition is skewed to polar residues over residues 716–737 (GQSNLNEGTPLRSDTSCGQSVA) and 746–760 (NQGNDSSSNVRTPNA). The segment covering 774–792 (DEARRKAVQRELRKMKTGR) has biased composition (basic and acidic residues).

It belongs to the PHD-associated homeobox family. As to expression, expressed in roots, leaves, stems, panicle and seeds.

Its subcellular location is the nucleus. In terms of biological role, transcriptional repressor involved in the regulation of gibberrelin (GA) signaling. Binds to the 5'-GATC-3' motif of HD16/EL1 promoter. Functions as a positive regulator of GA signaling by suppressing the expression of HD16/EL1, a negative regulator of GA signaling. This is Homeobox protein HAZ1 from Oryza sativa subsp. japonica (Rice).